The following is a 250-amino-acid chain: Type III pantothenate kinase (250 aa).

Residue 6–13 (DVGNTNTV) coordinates ATP. Position 103-106 (103-106 (GADR)) interacts with substrate. Asp105 serves as the catalytic Proton acceptor. Asp125 is a binding site for K(+). Thr128 lines the ATP pocket. Thr180 contributes to the substrate binding site.

It belongs to the type III pantothenate kinase family. As to quaternary structure, homodimer. The cofactor is NH4(+). K(+) serves as cofactor.

It localises to the cytoplasm. It catalyses the reaction (R)-pantothenate + ATP = (R)-4'-phosphopantothenate + ADP + H(+). It functions in the pathway cofactor biosynthesis; coenzyme A biosynthesis; CoA from (R)-pantothenate: step 1/5. In terms of biological role, catalyzes the phosphorylation of pantothenate (Pan), the first step in CoA biosynthesis. The protein is Type III pantothenate kinase of Frankia alni (strain DSM 45986 / CECT 9034 / ACN14a).